We begin with the raw amino-acid sequence, 123 residues long: Large ribosomal subunit protein uL24 (123 aa).

This sequence belongs to the universal ribosomal protein uL24 family. Part of the 50S ribosomal subunit.

Functionally, one of two assembly initiator proteins, it binds directly to the 5'-end of the 23S rRNA, where it nucleates assembly of the 50S subunit. One of the proteins that surrounds the polypeptide exit tunnel on the outside of the subunit. This Solibacter usitatus (strain Ellin6076) protein is Large ribosomal subunit protein uL24.